A 336-amino-acid polypeptide reads, in one-letter code: Fructose-1,6-bisphosphatase class 1 (336 aa).

Mg(2+) contacts are provided by Glu92, Asp115, Leu117, and Asp118. Residues 118 to 121 (DGSS), Asn211, Tyr244, 262 to 264 (YLY), and Lys274 contribute to the substrate site. Mg(2+) is bound at residue Glu280.

It belongs to the FBPase class 1 family. In terms of assembly, homotetramer. Mg(2+) serves as cofactor.

Its subcellular location is the cytoplasm. The catalysed reaction is beta-D-fructose 1,6-bisphosphate + H2O = beta-D-fructose 6-phosphate + phosphate. Its pathway is carbohydrate biosynthesis; gluconeogenesis. In Vibrio cholerae serotype O1 (strain ATCC 39541 / Classical Ogawa 395 / O395), this protein is Fructose-1,6-bisphosphatase class 1.